The following is a 391-amino-acid chain: uncharacterized protein (391 aa).

A compositionally biased stretch (low complexity) spans 118 to 149 (SINSLPPTTTTTTTTTTTTTIPNNNNNITLSP). 4 disordered regions span residues 118 to 162 (SINS…HQHP), 184 to 258 (QTNV…TPRN), 272 to 327 (NNNL…NNLN), and 337 to 356 (LNLNNNNNNNNNNNNNNNNN). Residues 150 to 162 (QHHHGQQQHHQHP) show a composition bias toward basic residues. A compositionally biased stretch (low complexity) spans 186-211 (NVNNNNNNNNNNNNNNNSNNNNNNNN). Over residues 212 to 223 (DFSTPNSFSVPT) the composition is skewed to polar residues. The segment covering 244–256 (NTPNNSTSNPTTP) has biased composition (low complexity).

This is an uncharacterized protein from Dictyostelium discoideum (Social amoeba).